The sequence spans 200 residues: Serotonin N-acetyltransferase 2, chloroplastic (200 aa).

Residues 1 to 41 (MQMQAARPRVGVRPRGGIRPFPLPTLSFNNNSNRSACACAC) constitute a chloroplast transit peptide. Residues 55 to 195 (FAVRRSSTGL…MAFYRSRQQI (141 aa)) enclose the N-acetyltransferase domain.

Its subcellular location is the cytoplasm. It is found in the plastid. The protein resides in the chloroplast. It catalyses the reaction serotonin + acetyl-CoA = N-acetylserotonin + CoA + H(+). The enzyme catalyses tyramine + acetyl-CoA = N-acetyltyramine + CoA + H(+). It carries out the reaction tryptamine + acetyl-CoA = N-acetyltryptamine + CoA + H(+). The catalysed reaction is 5-methoxytryptamine + acetyl-CoA = melatonin + CoA + H(+). The protein operates within aromatic compound metabolism; melatonin biosynthesis; melatonin from serotonin: step 1/2. Catalyzes the N-acetylation of serotonin into N-acetylserotonin, the penultimate step in the synthesis of melatonin. Catalyzes in vitro the N-acetylation of tryptamine to produce N-acetyltryptamine, 5-methoxytryptamine to produce melatonin and tyramine to produce N-acetyltyramine. The chain is Serotonin N-acetyltransferase 2, chloroplastic from Oryza sativa subsp. japonica (Rice).